The following is a 475-amino-acid chain: Adenylyl cyclase-associated protein 1 (475 aa).

The residue at position 2 (alanine 2) is an N-acetylalanine. The residue at position 31 (tyrosine 31) is a Phosphotyrosine. Phosphoserine is present on serine 34. The residue at position 81 (lysine 81) is an N6-acetyllysine. Disordered regions lie at residues glutamate 216–proline 237 and methionine 278–proline 319. Over residues serine 218–serine 228 the composition is skewed to low complexity. Lysine 287 is subject to N6-methyllysine. Residues serine 290, serine 295, and serine 301 each carry the phosphoserine modification. Position 307 is a phosphothreonine (threonine 307). Serine 308 and serine 310 each carry phosphoserine. The 135-residue stretch at proline 319–valine 453 folds into the C-CAP/cofactor C-like domain. Residue lysine 348 forms a Glycyl lysine isopeptide (Lys-Gly) (interchain with G-Cter in SUMO1) linkage.

The protein belongs to the CAP family. In terms of assembly, homodimer. Binds actin monomers.

It localises to the cell membrane. Functionally, directly regulates filament dynamics and has been implicated in a number of complex developmental and morphological processes, including mRNA localization and the establishment of cell polarity. This is Adenylyl cyclase-associated protein 1 (CAP1) from Homo sapiens (Human).